We begin with the raw amino-acid sequence, 474 residues long: Bifunctional protein HldE (474 aa).

Positions 1–318 (MKLSMPRFDQ…RAVQREQGSE (318 aa)) are ribokinase. ATP is bound at residue 194–197 (NLSE). Asp-263 is an active-site residue. Residues 343–474 (FTNGCFDILH…AIVEKIRQKG (132 aa)) are cytidylyltransferase.

It in the N-terminal section; belongs to the carbohydrate kinase PfkB family. In the C-terminal section; belongs to the cytidylyltransferase family. In terms of assembly, homodimer.

It catalyses the reaction D-glycero-beta-D-manno-heptose 7-phosphate + ATP = D-glycero-beta-D-manno-heptose 1,7-bisphosphate + ADP + H(+). It carries out the reaction D-glycero-beta-D-manno-heptose 1-phosphate + ATP + H(+) = ADP-D-glycero-beta-D-manno-heptose + diphosphate. It participates in nucleotide-sugar biosynthesis; ADP-L-glycero-beta-D-manno-heptose biosynthesis; ADP-L-glycero-beta-D-manno-heptose from D-glycero-beta-D-manno-heptose 7-phosphate: step 1/4. It functions in the pathway nucleotide-sugar biosynthesis; ADP-L-glycero-beta-D-manno-heptose biosynthesis; ADP-L-glycero-beta-D-manno-heptose from D-glycero-beta-D-manno-heptose 7-phosphate: step 3/4. Its pathway is bacterial outer membrane biogenesis; LPS core biosynthesis. Functionally, catalyzes the phosphorylation of D-glycero-D-manno-heptose 7-phosphate at the C-1 position to selectively form D-glycero-beta-D-manno-heptose-1,7-bisphosphate. Catalyzes the ADP transfer from ATP to D-glycero-beta-D-manno-heptose 1-phosphate, yielding ADP-D-glycero-beta-D-manno-heptose. The chain is Bifunctional protein HldE from Pseudomonas aeruginosa (strain ATCC 15692 / DSM 22644 / CIP 104116 / JCM 14847 / LMG 12228 / 1C / PRS 101 / PAO1).